The chain runs to 267 residues: Exodeoxyribonuclease III (267 aa).

Glutamate 34 lines the Mg(2+) pocket. Tyrosine 109 is an active-site residue. Aspartate 151, asparagine 153, and aspartate 258 together coordinate Mg(2+). The active-site Proton donor/acceptor is aspartate 151.

It belongs to the DNA repair enzymes AP/ExoA family. As to quaternary structure, monomer. Mg(2+) is required as a cofactor. Requires Mn(2+) as cofactor.

The enzyme catalyses Exonucleolytic cleavage in the 3'- to 5'-direction to yield nucleoside 5'-phosphates.. Major apurinic-apyrimidinic endonuclease of E.coli. It removes the damaged DNA at cytosines and guanines by cleaving on the 3'-side of the AP site by a beta-elimination reaction. This is Exodeoxyribonuclease III (xthA) from Haemophilus influenzae (strain ATCC 51907 / DSM 11121 / KW20 / Rd).